A 247-amino-acid chain; its full sequence is Coproheme decarboxylase (247 aa).

Residues R129, 143–147 (YPMDK), H170, Q183, and S221 contribute to the Fe-coproporphyrin III site. Residue Y143 is part of the active site.

The protein belongs to the ChdC family. Type 1 subfamily. Fe-coproporphyrin III is required as a cofactor.

The enzyme catalyses Fe-coproporphyrin III + 2 H2O2 + 2 H(+) = heme b + 2 CO2 + 4 H2O. The catalysed reaction is Fe-coproporphyrin III + H2O2 + H(+) = harderoheme III + CO2 + 2 H2O. It carries out the reaction harderoheme III + H2O2 + H(+) = heme b + CO2 + 2 H2O. The protein operates within porphyrin-containing compound metabolism; protoheme biosynthesis. In terms of biological role, involved in coproporphyrin-dependent heme b biosynthesis. Catalyzes the decarboxylation of Fe-coproporphyrin III (coproheme) to heme b (protoheme IX), the last step of the pathway. The reaction occurs in a stepwise manner with a three-propionate intermediate. This is Coproheme decarboxylase from Bacillus anthracis.